A 162-amino-acid polypeptide reads, in one-letter code: Protein SLM4 (162 aa).

The chain crosses the membrane as a helical span at residues 127–144 (LLLLFIAEGSFPYGLLVI).

Component of the GSE complex composed of GTR1, GTR2, SLM4, MEH1 and LTV1. Component of the EGO complex, at least composed of GTR2, SLM4 and MEH1.

Its subcellular location is the vacuole membrane. In terms of biological role, component of the GSE complex, a GTPase complex required for intracellular sorting of GAP1 out of the endosome. Component of the EGO complex, a complex involved in the regulation of microautophagy. The sequence is that of Protein SLM4 (SLM4) from Saccharomyces cerevisiae (strain ATCC 204508 / S288c) (Baker's yeast).